The sequence spans 949 residues: L-fucokinase/L-fucose-1-P guanylyltransferase (949 aa).

The segment at 25-191 (DWFCTSDPVG…DFMLQKPSLA (167 aa)) is fucose-1-phosphate guanylyltransferase. Positions 559–949 (LLRDGLLDGI…SDKGFQVSRS (391 aa)) are L-fucokinase.

Belongs to the GHMP kinase family. In terms of assembly, homotetramer. Mn(2+) serves as cofactor. It depends on Mg(2+) as a cofactor.

It catalyses the reaction L-fucose + ATP = beta-L-fucose 1-phosphate + ADP + H(+). The enzyme catalyses beta-L-fucose 1-phosphate + GTP + H(+) = GDP-beta-L-fucose + diphosphate. Its function is as follows. Bifunctional enzyme involved in the salvage pathway of GDP-fucose synthesis. Catalyzes two successive reactions, the ATP-dependent phosphorylation of L-fucose to L-fucose 1-phosphate, and its guanylylation to GDP-L-fucose. GDP-fucose is an important fucose donor in the process of fucosylated oligosaccharides formation. In Bacteroides fragilis, this protein is L-fucokinase/L-fucose-1-P guanylyltransferase.